The chain runs to 801 residues: MWTTGRMSNAKSWLGLGTSLYFWALMDLTATVLSSTPMPEVELETLFSGRSQSHQRSKRSWVWNQFFVLEEYTGTDPLYVGKLHSDMDRGDGSIKYILSGEGAGIVFTIDDTTGDIHAIQRLDREERAQYTLRAQALDRRTGRPMEPESEFIIKIQDINDNEPKFLDGPYIATVPEMSPVGTSVIQVTATDADDPTYGNSARVVYSILQGQPYFSVDSKTGVIRTALMNMDREAKEYYEVIIQAKDMGGQLGGLAGTTTVNITLSDVNDNPPRFPQKHYQMSVLESAPISSTVGRVFAKDLDEGINAEMKYTIVDGDGADAFDINTDQNFQVGIITVKKPLSFESKKSYTLKVEGSNPHLEMRFLNLGPFQDTTTVHISVEDVDEPPVFEPGFYFVEVPEDVTIGTTIQIISAKDPDVTNNSIRYSIDRGSDPGRFFYVDITTGALMTARPLDREEFSWHNITVLAMEMNNPSQVGSVAVTIKVLDVNDNAPEFPRFYEAFICENAKAGQLIQTVSAVDQDDPHNGQHFYYSLAPEAANNPNFTVRDNQDNTARILTRRSGFRQQEQSVFYLPILIADSGQPVLSSTGTLTIQVCSCNDDGHVMSCSPEAYLLPVSLSRGALIAILACIFVLLVLVLLILSMRRHRKQPYIIDDDENIHENIVRYDDEGGGEEDTEAFDIAAMWNPREAQAGAAPKTRQDMLPEIESLSRYVPQTCAVSSTVHSYVLAKLYEADMDLWAPPFDSLQTYMFEGDGSVAGSLSSLQSATSDSEQSFDFLTDWGPRFRKLAELYGASEGPAPLW.

Positions 1 to 34 (MWTTGRMSNAKSWLGLGTSLYFWALMDLTATVLS) are cleaved as a signal peptide. Positions 35–59 (STPMPEVELETLFSGRSQSHQRSKR) are excised as a propeptide. At 60 to 619 (SWVWNQFFVL…AYLLPVSLSR (560 aa)) the chain is on the extracellular side. 5 Cadherin domains span residues 61-165 (WVWN…EPKF), 166-274 (LDGP…PPRF), 275-389 (PQKH…PPVF), 390-494 (EPGF…APEF), and 494-610 (FPRF…SPEA). Residue asparagine 261 is glycosylated (N-linked (GlcNAc...) asparagine). Residues asparagine 420, asparagine 461, and asparagine 542 are each glycosylated (N-linked (GlcNAc...) asparagine). A helical transmembrane segment spans residues 620-640 (GALIAILACIFVLLVLVLLIL). The Cytoplasmic segment spans residues 641–801 (SMRRHRKQPY…GASEGPAPLW (161 aa)).

As to expression, expressed in brain. Highest level of expression in the retina. In embryo it is synthesized by the forebrain, anterior neural ridge, developing visual system, primitive external granular layer of the cerebellum and a subset of neural crest cells likely to develop into melanoblasts.

The protein localises to the cell membrane. Its function is as follows. Cadherins are calcium-dependent cell adhesion proteins. They preferentially interact with themselves in a homophilic manner in connecting cells; cadherins may thus contribute to the sorting of heterogeneous cell types. This is Cadherin-20 (Cdh20) from Mus musculus (Mouse).